The sequence spans 54 residues: UPF0391 membrane protein Rfer_1875 (54 aa).

The next 2 membrane-spanning stretches (helical) occupy residues 5-25 (AVVF…GIAA) and 30-50 (IGKI…LFGL).

The protein belongs to the UPF0391 family.

Its subcellular location is the cell membrane. This chain is UPF0391 membrane protein Rfer_1875, found in Albidiferax ferrireducens (strain ATCC BAA-621 / DSM 15236 / T118) (Rhodoferax ferrireducens).